A 119-amino-acid polypeptide reads, in one-letter code: Large ribosomal subunit protein bL20 (119 aa).

Belongs to the bacterial ribosomal protein bL20 family.

Functionally, binds directly to 23S ribosomal RNA and is necessary for the in vitro assembly process of the 50S ribosomal subunit. It is not involved in the protein synthesizing functions of that subunit. The polypeptide is Large ribosomal subunit protein bL20 (Shewanella halifaxensis (strain HAW-EB4)).